The primary structure comprises 254 residues: 5-oxoprolinase subunit A (254 aa).

Belongs to the LamB/PxpA family. In terms of assembly, forms a complex composed of PxpA, PxpB and PxpC.

The enzyme catalyses 5-oxo-L-proline + ATP + 2 H2O = L-glutamate + ADP + phosphate + H(+). Functionally, catalyzes the cleavage of 5-oxoproline to form L-glutamate coupled to the hydrolysis of ATP to ADP and inorganic phosphate. This Heliobacterium modesticaldum (strain ATCC 51547 / Ice1) protein is 5-oxoprolinase subunit A.